The primary structure comprises 196 residues: Purpurin (196 aa).

The first 21 residues, 1-21 (MKYAQYVFLASIFSAVEYSLA), serve as a signal peptide directing secretion. 3 disulfides stabilise this stretch: Cys24–Cys182, Cys90–Cys196, and Cys142–Cys151.

It belongs to the calycin superfamily. Lipocalin family.

Its subcellular location is the secreted. The protein localises to the extracellular space. It is found in the extracellular matrix. The protein resides in the interphotoreceptor matrix. May be involved in the transport of retinol between the photoreceptors and the pigmented epithelium. This is Purpurin from Gallus gallus (Chicken).